The chain runs to 155 residues: Probable cyclic pyranopterin monophosphate synthase (155 aa).

Substrate-binding positions include 74 to 76 (MCH) and 110 to 111 (ME). The active site involves D125.

The protein belongs to the MoaC family. Homohexamer; trimer of dimers.

The enzyme catalyses (8S)-3',8-cyclo-7,8-dihydroguanosine 5'-triphosphate = cyclic pyranopterin phosphate + diphosphate. It functions in the pathway cofactor biosynthesis; molybdopterin biosynthesis. Catalyzes the conversion of (8S)-3',8-cyclo-7,8-dihydroguanosine 5'-triphosphate to cyclic pyranopterin monophosphate (cPMP). In Methanoregula boonei (strain DSM 21154 / JCM 14090 / 6A8), this protein is Probable cyclic pyranopterin monophosphate synthase.